The chain runs to 75 residues: Exodeoxyribonuclease 7 small subunit (75 aa).

The protein belongs to the XseB family. Heterooligomer composed of large and small subunits.

It localises to the cytoplasm. The catalysed reaction is Exonucleolytic cleavage in either 5'- to 3'- or 3'- to 5'-direction to yield nucleoside 5'-phosphates.. In terms of biological role, bidirectionally degrades single-stranded DNA into large acid-insoluble oligonucleotides, which are then degraded further into small acid-soluble oligonucleotides. The polypeptide is Exodeoxyribonuclease 7 small subunit (Listeria innocua serovar 6a (strain ATCC BAA-680 / CLIP 11262)).